A 206-amino-acid polypeptide reads, in one-letter code: Protein GrpE (206 aa).

Residues 1 to 36 (MTDSNGPKDNNQDQAQAAADPVVSKPYIMPDDPEDG) form a disordered region.

This sequence belongs to the GrpE family. As to quaternary structure, homodimer.

The protein localises to the cytoplasm. Participates actively in the response to hyperosmotic and heat shock by preventing the aggregation of stress-denatured proteins, in association with DnaK and GrpE. It is the nucleotide exchange factor for DnaK and may function as a thermosensor. Unfolded proteins bind initially to DnaJ; upon interaction with the DnaJ-bound protein, DnaK hydrolyzes its bound ATP, resulting in the formation of a stable complex. GrpE releases ADP from DnaK; ATP binding to DnaK triggers the release of the substrate protein, thus completing the reaction cycle. Several rounds of ATP-dependent interactions between DnaJ, DnaK and GrpE are required for fully efficient folding. This Rhodopseudomonas palustris (strain HaA2) protein is Protein GrpE.